The following is a 396-amino-acid chain: Putative nickel insertion protein (396 aa).

Belongs to the LarC family.

This Methanococcoides burtonii (strain DSM 6242 / NBRC 107633 / OCM 468 / ACE-M) protein is Putative nickel insertion protein.